The sequence spans 79 residues: ATP synthase subunit c (79 aa).

2 consecutive transmembrane segments (helical) span residues 11-31 and 59-79; these read IAVA…IGIL and LVDA…FAVI.

Belongs to the ATPase C chain family. F-type ATPases have 2 components, F(1) - the catalytic core - and F(0) - the membrane proton channel. F(1) has five subunits: alpha(3), beta(3), gamma(1), delta(1), epsilon(1). F(0) has three main subunits: a(1), b(2) and c(10-14). The alpha and beta chains form an alternating ring which encloses part of the gamma chain. F(1) is attached to F(0) by a central stalk formed by the gamma and epsilon chains, while a peripheral stalk is formed by the delta and b chains.

The protein resides in the cell membrane. Functionally, f(1)F(0) ATP synthase produces ATP from ADP in the presence of a proton or sodium gradient. F-type ATPases consist of two structural domains, F(1) containing the extramembraneous catalytic core and F(0) containing the membrane proton channel, linked together by a central stalk and a peripheral stalk. During catalysis, ATP synthesis in the catalytic domain of F(1) is coupled via a rotary mechanism of the central stalk subunits to proton translocation. Its function is as follows. Key component of the F(0) channel; it plays a direct role in translocation across the membrane. A homomeric c-ring of between 10-14 subunits forms the central stalk rotor element with the F(1) delta and epsilon subunits. The sequence is that of ATP synthase subunit c from Buchnera aphidicola subsp. Baizongia pistaciae (strain Bp).